Consider the following 366-residue polypeptide: 4-hydroxy-3-methylbut-2-en-1-yl diphosphate synthase (flavodoxin) (366 aa).

4 residues coordinate [4Fe-4S] cluster: C270, C273, C305, and E312.

It belongs to the IspG family. It depends on [4Fe-4S] cluster as a cofactor.

The catalysed reaction is (2E)-4-hydroxy-3-methylbut-2-enyl diphosphate + oxidized [flavodoxin] + H2O + 2 H(+) = 2-C-methyl-D-erythritol 2,4-cyclic diphosphate + reduced [flavodoxin]. It functions in the pathway isoprenoid biosynthesis; isopentenyl diphosphate biosynthesis via DXP pathway; isopentenyl diphosphate from 1-deoxy-D-xylulose 5-phosphate: step 5/6. Its function is as follows. Converts 2C-methyl-D-erythritol 2,4-cyclodiphosphate (ME-2,4cPP) into 1-hydroxy-2-methyl-2-(E)-butenyl 4-diphosphate. The sequence is that of 4-hydroxy-3-methylbut-2-en-1-yl diphosphate synthase (flavodoxin) from Acidithiobacillus ferrooxidans (strain ATCC 53993 / BNL-5-31) (Leptospirillum ferrooxidans (ATCC 53993)).